The sequence spans 372 residues: MARQQTKKNYSLRKLKTGTASVAVALTVLGAGFANQTEVRADEAKKMEVKESEKESQYKTLALRGENADLRNVNAKYLEKINAEEEKNKKLEAINKELNENYYKLQDGIDALEKEKEDLKTTLAKTTKENEISEASRKGLSRDLEASRTAKKELEAKHQKLEAENKKLTEGNQVSEASRKGLSNDLEASRAAKKELEAKYQKLETDHQALEAKHQKLEADYQVSETSRKGLSRDLEASREANKKVTSELTQAKAQLSALEESKKLSEKEKAELQAKLDAQGKALKEQLAKQTEELAKLRAEKAAGSKTPATKPANKERSGRAAQTATRPSQNKGMRSQLPSTGEAANPFFTAAAATVMVSAGMLALKRKEEN.

The N-terminal stretch at 1-41 is a signal peptide; sequence MARQQTKKNYSLRKLKTGTASVAVALTVLGAGFANQTEVRA. C repeat units lie at residues 124–158, 166–200, and 215–249; these read AKTT…EAKH, KKLT…EAKY, and QKLE…TSEL. Composition is skewed to basic and acidic residues over residues 125–169, 226–246, and 260–274; these read KTTK…KKLT, TSRK…KKVT, and EESK…AELQ. 2 disordered regions span residues 125 to 191 and 211 to 274; these read KTTK…ASRA and EAKH…AELQ. 4 D repeats span residues 275-280, 281-286, 289-294, and 296-301; these read AKLDAQ, GKALKE, AKQTEE, and AKLRAE. Residues 295–304 are compositionally biased toward basic and acidic residues; it reads LAKLRAEKAA. Residues 295-344 are disordered; that stretch reads LAKLRAEKAAGSKTPATKPANKERSGRAAQTATRPSQNKGMRSQLPSTGE. The span at 322 to 341 shows a compositional bias: polar residues; sequence AAQTATRPSQNKGMRSQLPS. Positions 339–343 match the LPXTG sorting signal motif; it reads LPSTG. Position 342 is a pentaglycyl murein peptidoglycan amidated threonine (Thr-342). Positions 343–372 are cleaved as a propeptide — removed by sortase; sequence GEAANPFFTAAAATVMVSAGMLALKRKEEN.

It belongs to the M protein family.

The protein localises to the secreted. It localises to the cell wall. Its function is as follows. This protein is one of the different antigenic serotypes of protein M. Protein M is closely associated with virulence of the bacterium and can render the organism resistant to phagocytosis. This Streptococcus pyogenes protein is M protein, serotype 2.2 (emmL2.2).